Consider the following 156-residue polypeptide: Deoxyuridine 5'-triphosphate nucleotidohydrolase (156 aa).

Residues 76-78 (RSG), asparagine 89, 93-95 (TVD), and lysine 103 contribute to the substrate site.

Belongs to the dUTPase family. Requires Mg(2+) as cofactor.

It carries out the reaction dUTP + H2O = dUMP + diphosphate + H(+). It participates in pyrimidine metabolism; dUMP biosynthesis; dUMP from dCTP (dUTP route): step 2/2. Its function is as follows. This enzyme is involved in nucleotide metabolism: it produces dUMP, the immediate precursor of thymidine nucleotides and it decreases the intracellular concentration of dUTP so that uracil cannot be incorporated into DNA. This is Deoxyuridine 5'-triphosphate nucleotidohydrolase from Rhizobium leguminosarum bv. trifolii (strain WSM2304).